We begin with the raw amino-acid sequence, 183 residues long: Archaemetzincin (183 aa).

Residue H131 coordinates Zn(2+). The Proton acceptor role is filled by E132. Zn(2+)-binding residues include H135, H141, C142, C147, C166, and C169.

Belongs to the peptidase M54 family. In terms of assembly, monomer. It depends on Zn(2+) as a cofactor.

Its function is as follows. Probable zinc metalloprotease whose natural substrate is unknown. This Saccharolobus islandicus (strain Y.N.15.51 / Yellowstone #2) (Sulfolobus islandicus) protein is Archaemetzincin.